The following is a 420-amino-acid chain: 3-oxo-tetronate kinase (420 aa).

Residues Ser258, 360 to 363, and Gly403 each bind ATP; that span reads GGET.

It belongs to the four-carbon acid sugar kinase family.

The catalysed reaction is 3-dehydro-L-erythronate + ATP = 3-dehydro-4-O-phospho-L-erythronate + ADP + H(+). It carries out the reaction 3-dehydro-D-erythronate + ATP = 3-dehydro-4-O-phospho-D-erythronate + ADP + H(+). In terms of biological role, catalyzes the ATP-dependent phosphorylation of 3-oxo-tetronate to 3-oxo-tetronate 4-phosphate. The chain is 3-oxo-tetronate kinase from Salmonella typhimurium (strain LT2 / SGSC1412 / ATCC 700720).